Here is a 224-residue protein sequence, read N- to C-terminus: UPF0758 protein Neut_0782 (224 aa).

The 123-residue stretch at I102–I224 folds into the MPN domain. Residues H173, H175, and D186 each contribute to the Zn(2+) site. Positions H173–D186 match the JAMM motif motif.

This sequence belongs to the UPF0758 family.

This is UPF0758 protein Neut_0782 from Nitrosomonas eutropha (strain DSM 101675 / C91 / Nm57).